A 359-amino-acid chain; its full sequence is MATH domain and coiled-coil domain-containing protein At2g42475 (359 aa).

Residues 6–128 (KTSFTFEIEN…NDKLIITVEV (123 aa)) form the MATH domain. Residues 146 to 337 (EFKELQDLYN…NLELMVLDFK (192 aa)) are a coiled coil.

The sequence is that of MATH domain and coiled-coil domain-containing protein At2g42475 from Arabidopsis thaliana (Mouse-ear cress).